Reading from the N-terminus, the 95-residue chain is Aspartyl/glutamyl-tRNA(Asn/Gln) amidotransferase subunit C (95 aa).

Belongs to the GatC family. In terms of assembly, heterotrimer of A, B and C subunits.

It catalyses the reaction L-glutamyl-tRNA(Gln) + L-glutamine + ATP + H2O = L-glutaminyl-tRNA(Gln) + L-glutamate + ADP + phosphate + H(+). The catalysed reaction is L-aspartyl-tRNA(Asn) + L-glutamine + ATP + H2O = L-asparaginyl-tRNA(Asn) + L-glutamate + ADP + phosphate + 2 H(+). Its function is as follows. Allows the formation of correctly charged Asn-tRNA(Asn) or Gln-tRNA(Gln) through the transamidation of misacylated Asp-tRNA(Asn) or Glu-tRNA(Gln) in organisms which lack either or both of asparaginyl-tRNA or glutaminyl-tRNA synthetases. The reaction takes place in the presence of glutamine and ATP through an activated phospho-Asp-tRNA(Asn) or phospho-Glu-tRNA(Gln). This chain is Aspartyl/glutamyl-tRNA(Asn/Gln) amidotransferase subunit C, found in Magnetococcus marinus (strain ATCC BAA-1437 / JCM 17883 / MC-1).